Reading from the N-terminus, the 485-residue chain is Pelle-like serine/threonine-protein kinase pik-1 (485 aa).

The span at 115-132 shows a compositional bias: polar residues; sequence TSRVSKQMVQPPGSQSAS. A disordered region spans residues 115-155; the sequence is TSRVSKQMVQPPGSQSASRLKKTEIKESSPSPAAAAASQLS. Residues 142-152 show a composition bias toward low complexity; sequence SSPSPAAAAAS. In terms of domain architecture, Protein kinase spans 185–485; that stretch reads FAVSNVIGKG…LCKNSIPPVV (301 aa). ATP-binding positions include 191–199 and Lys-214; that span reads IGKGGYGTV. Asp-318 serves as the catalytic Proton acceptor.

Belongs to the protein kinase superfamily. TKL Ser/Thr protein kinase family. Pelle subfamily. Interacts with actl-1. As to expression, expressed in the nervous system.

The enzyme catalyses L-seryl-[protein] + ATP = O-phospho-L-seryl-[protein] + ADP + H(+). It carries out the reaction L-threonyl-[protein] + ATP = O-phospho-L-threonyl-[protein] + ADP + H(+). Through association with the adapter actl-1, may act downstream of the receptor complex composed of ilcr-1 and ilcr-2, which is a signaling complex that modulates neuronal activity and animal behavior in response to sensory neuron input. The chain is Pelle-like serine/threonine-protein kinase pik-1 from Caenorhabditis elegans.